A 296-amino-acid polypeptide reads, in one-letter code: Probable GTP 3',8-cyclase (296 aa).

A Radical SAM core domain is found at 5-230; it reads EYGRVVTNLR…HRRTQYFTPK (226 aa). Residue Arg-14 coordinates GTP. Cys-21 and Cys-25 together coordinate [4Fe-4S] cluster. Tyr-27 is a binding site for S-adenosyl-L-methionine. Position 28 (Cys-28) interacts with [4Fe-4S] cluster. Lys-61 contacts GTP. Gly-65 is a binding site for S-adenosyl-L-methionine. Thr-89 contacts GTP. Ser-113 contributes to the S-adenosyl-L-methionine binding site. GTP is bound at residue Lys-150. Residues Cys-245 and Cys-248 each contribute to the [4Fe-4S] cluster site. 250-252 contributes to the GTP binding site; that stretch reads RMR. Cys-262 lines the [4Fe-4S] cluster pocket.

Belongs to the radical SAM superfamily. MoaA family. Requires [4Fe-4S] cluster as cofactor.

It catalyses the reaction GTP + AH2 + S-adenosyl-L-methionine = (8S)-3',8-cyclo-7,8-dihydroguanosine 5'-triphosphate + 5'-deoxyadenosine + L-methionine + A + H(+). The protein operates within cofactor biosynthesis; molybdopterin biosynthesis. In terms of biological role, catalyzes the cyclization of GTP to (8S)-3',8-cyclo-7,8-dihydroguanosine 5'-triphosphate. The polypeptide is Probable GTP 3',8-cyclase (Archaeoglobus fulgidus (strain ATCC 49558 / DSM 4304 / JCM 9628 / NBRC 100126 / VC-16)).